We begin with the raw amino-acid sequence, 146 residues long: Hemoglobin subunit beta (146 aa).

Val1 is subject to N-acetylvaline. The Globin domain occupies 2 to 146 (HLTAEEKSAV…VATALAHKYH (145 aa)). At Thr12 the chain carries Phosphothreonine. At Ser44 the chain carries Phosphoserine. Residue Lys59 is modified to N6-acetyllysine. His63 is a binding site for heme b. Lys82 bears the N6-acetyllysine mark. His92 is a heme b binding site. At Cys93 the chain carries S-nitrosocysteine. Residue Lys144 is modified to N6-acetyllysine.

The protein belongs to the globin family. Heterotetramer of two alpha chains and two beta chains. Red blood cells.

Functionally, involved in oxygen transport from the lung to the various peripheral tissues. The chain is Hemoglobin subunit beta (HBB) from Cebus albifrons (White-fronted capuchin).